Reading from the N-terminus, the 239-residue chain is Homeobox protein Nkx-2.8 (239 aa).

Positions 1–11 (MATSGRLSFTV) are enriched in polar residues. The tract at residues 1 to 87 (MATSGRLSFT…GSDAEKRKKR (87 aa)) is disordered. The span at 21–32 (DAQHLPRREPEP) shows a compositional bias: basic and acidic residues. Low complexity predominate over residues 62–79 (SPPDSSQRPSARPASPGS). Residues 84-143 (RKKRRVLFSKAQTLELERRFRQQRYLSAPEREQLASLLRLTPTQVKIWFQNHRYKLKRAR) constitute a DNA-binding region (homeobox).

This sequence belongs to the NK-2 homeobox family.

The protein localises to the nucleus. This is Homeobox protein Nkx-2.8 (NKX2-8) from Homo sapiens (Human).